Here is a 24-residue protein sequence, read N- to C-terminus: Protein YahV (24 aa).

A helical membrane pass occupies residues Ile4–Cys24.

Its subcellular location is the cell inner membrane. This chain is Protein YahV, found in Escherichia coli (strain K12).